A 314-amino-acid polypeptide reads, in one-letter code: Homoserine O-acetyltransferase (314 aa).

Cysteine 142 functions as the Acyl-thioester intermediate in the catalytic mechanism. The substrate site is built by lysine 163 and serine 192. Residue histidine 235 is the Proton acceptor of the active site. Glutamate 237 is an active-site residue. A substrate-binding site is contributed by arginine 249.

This sequence belongs to the MetA family.

The protein localises to the cytoplasm. The enzyme catalyses L-homoserine + acetyl-CoA = O-acetyl-L-homoserine + CoA. It functions in the pathway amino-acid biosynthesis; L-methionine biosynthesis via de novo pathway; O-acetyl-L-homoserine from L-homoserine: step 1/1. Transfers an acetyl group from acetyl-CoA to L-homoserine, forming acetyl-L-homoserine. This Streptococcus pneumoniae (strain JJA) protein is Homoserine O-acetyltransferase.